Consider the following 345-residue polypeptide: Protein RecA (345 aa).

66–73 (GPESSGKT) contributes to the ATP binding site.

Belongs to the RecA family.

The protein localises to the cytoplasm. Its function is as follows. Can catalyze the hydrolysis of ATP in the presence of single-stranded DNA, the ATP-dependent uptake of single-stranded DNA by duplex DNA, and the ATP-dependent hybridization of homologous single-stranded DNAs. It interacts with LexA causing its activation and leading to its autocatalytic cleavage. The polypeptide is Protein RecA (Helicobacter hepaticus (strain ATCC 51449 / 3B1)).